Consider the following 317-residue polypeptide: Putative carboxypeptidase RP402 (317 aa).

The active-site Nucleophile is S125. Residues E225 and H288 each act as charge relay system in the active site.

This sequence belongs to the peptidase S66 family.

The sequence is that of Putative carboxypeptidase RP402 from Rickettsia prowazekii (strain Madrid E).